The sequence spans 329 residues: 2-oxoglutarate-dependent dioxygenase mpl2 (329 aa).

The Fe2OG dioxygenase domain occupies 183–288 (PACPLRLLHY…RYSVVFFFDG (106 aa)). His211, Asp213, and His269 together coordinate Fe cation. Arg279 serves as a coordination point for 2-oxoglutarate.

The protein belongs to the iron/ascorbate-dependent oxidoreductase family. The cofactor is Fe(2+).

It functions in the pathway mycotoxin biosynthesis. Functionally, 2-oxoglutarate-dependent dioxygenase; part of the gene cluster that mediates the biosynthesis of the mycotoxin citrinin, a hepato-nephrotoxic compound to humans due to inhibition of respiration complex III. The pathway begins with the synthesis of a keto-aldehyde intermediate by the citrinin PKS (pksCT) from successive condensations of 4 malonyl-CoA units, presumably with a simple acetyl-CoA starter unit. Release of the keto-aldehyde intermediate is consistent with the presence of the C-terminal reductive release domain. Mp11 collaborates with pksCT by catalyzing the hydrolysis of ACP-bound acyl intermediates to free the ACP from stalled intermediates. Mpl2 then catalyzes the oxidation of the C-12 methyl of the ketone intermediate to an alcohol intermediate which is further oxidized by the oxidoreductase mpl7 to produce a bisaldehyde intermediate. The fourth catalytic step is catalyzed by the mpl4 aldehyde dehydrogenase. The final transformation is the reduction of C-3 by mpl6 to provide the chemically stable citrinin nucleus. This chain is 2-oxoglutarate-dependent dioxygenase mpl2, found in Monascus purpureus (Red mold).